The following is a 985-amino-acid chain: Alanine--tRNA ligase, mitochondrial (985 aa).

The N-terminal 23 residues, 1–23 (MAASVAAAAGRLRRAIGRSCPWQ), are a transit peptide targeting the mitochondrion. Residues R105, H123, W205, and 235–237 (LWN) each bind ATP. L-alanine contacts are provided by N237 and D260. G264 contributes to the ATP binding site. Zn(2+) contacts are provided by H632, H636, C749, and H753.

It belongs to the class-II aminoacyl-tRNA synthetase family. In terms of assembly, monomer. Zn(2+) serves as cofactor.

The protein localises to the mitochondrion. It carries out the reaction tRNA(Ala) + L-alanine + ATP = L-alanyl-tRNA(Ala) + AMP + diphosphate. The enzyme catalyses (S)-lactate + ATP + H(+) = (S)-lactoyl-AMP + diphosphate. The catalysed reaction is (S)-lactoyl-AMP + L-lysyl-[protein] = N(6)-[(S)-lactoyl]-L-lysyl-[protein] + AMP + 2 H(+). Its function is as follows. Catalyzes the attachment of alanine to tRNA(Ala) in a two-step reaction: alanine is first activated by ATP to form Ala-AMP and then transferred to the acceptor end of tRNA(Ala). Also edits incorrectly charged tRNA(Ala) via its editing domain. In presence of high levels of lactate, also acts as a protein lactyltransferase that mediates lactylation of lysine residues in target proteins, such as CGAS. Acts as an inhibitor of cGAS/STING signaling by catalyzing lactylation of CGAS, preventing the formation of liquid-like droplets in which CGAS is activated. This chain is Alanine--tRNA ligase, mitochondrial (Aars2), found in Rattus norvegicus (Rat).